The chain runs to 321 residues: Non-canonical heme oxygenase HOZ, chloroplastic (321 aa).

Residues 1–45 (MKSLVAHFSTPLITARLVPRCIIHRASISAVSFSTVRRRFSPLTM) constitute a chloroplast transit peptide. Residues 96–116 (CGMLSTFSQKYEGYPSGSMVD) form a dimerization region. 3 residues coordinate heme b: Ser-130, Val-134, and His-135. 2 dimerization regions span residues 144 to 166 (KCSLLIARDPEDRTGLRITLHGD) and 205 to 208 (KVVR).

As to quaternary structure, homodimer. Binds to heme in the interdimer interface; the heme iron is coordinated by a fixed water molecule.

It is found in the plastid. Its subcellular location is the chloroplast. In terms of biological role, dimeric beta-barrel protein binding to heme and catalyzing its degradation to produce biliverdin. May function in the tetrapyrrole biosynthetic pathway. This chain is Non-canonical heme oxygenase HOZ, chloroplastic, found in Arabidopsis thaliana (Mouse-ear cress).